Here is a 213-residue protein sequence, read N- to C-terminus: Penicillin-binding protein activator LpoB (213 aa).

Positions 1–19 (MMKMNRYALVAALAIFLSG) are cleaved as a signal peptide. A lipid anchor (N-palmitoyl cysteine) is attached at Cys20. Cys20 is lipidated: S-diacylglycerol cysteine. Residues 26 to 71 (PAPVDEVKPAPEQPAEPQQPVPVVPSVPTIPQQPGPIEHEDQTAQP) form a disordered region. The span at 36 to 50 (PEQPAEPQQPVPVVP) shows a compositional bias: pro residues.

The protein belongs to the LpoB family. Interacts with PBP1b.

It is found in the cell outer membrane. Regulator of peptidoglycan synthesis that is essential for the function of penicillin-binding protein 1B (PBP1b). The sequence is that of Penicillin-binding protein activator LpoB from Citrobacter koseri (strain ATCC BAA-895 / CDC 4225-83 / SGSC4696).